We begin with the raw amino-acid sequence, 677 residues long: UvrABC system protein B (677 aa).

A Helicase ATP-binding domain is found at 26 to 414 (DNLDAGLAHQ…SGNEVVEQVV (389 aa)). ATP is bound at residue 39-46 (GVTGSGKT). Residues 92–115 (YYDYYQPEAYVPTTDTFIEKDASI) carry the Beta-hairpin motif. One can recognise a Helicase C-terminal domain in the interval 432-598 (QVDDLMSEIR…GLNKDITDVM (167 aa)). A UVR domain is found at 637 to 672 (MKEIDAKEKEMYKAAQNLEFEQAGKLRDEVAELREQ).

Belongs to the UvrB family. In terms of assembly, forms a heterotetramer with UvrA during the search for lesions. Interacts with UvrC in an incision complex.

It is found in the cytoplasm. Functionally, the UvrABC repair system catalyzes the recognition and processing of DNA lesions. A damage recognition complex composed of 2 UvrA and 2 UvrB subunits scans DNA for abnormalities. Upon binding of the UvrA(2)B(2) complex to a putative damaged site, the DNA wraps around one UvrB monomer. DNA wrap is dependent on ATP binding by UvrB and probably causes local melting of the DNA helix, facilitating insertion of UvrB beta-hairpin between the DNA strands. Then UvrB probes one DNA strand for the presence of a lesion. If a lesion is found the UvrA subunits dissociate and the UvrB-DNA preincision complex is formed. This complex is subsequently bound by UvrC and the second UvrB is released. If no lesion is found, the DNA wraps around the other UvrB subunit that will check the other stand for damage. The polypeptide is UvrABC system protein B (Idiomarina loihiensis (strain ATCC BAA-735 / DSM 15497 / L2-TR)).